We begin with the raw amino-acid sequence, 120 residues long: Large ribosomal subunit protein bL19 (120 aa).

It belongs to the bacterial ribosomal protein bL19 family.

This protein is located at the 30S-50S ribosomal subunit interface and may play a role in the structure and function of the aminoacyl-tRNA binding site. This Thermodesulfovibrio yellowstonii (strain ATCC 51303 / DSM 11347 / YP87) protein is Large ribosomal subunit protein bL19.